A 275-amino-acid polypeptide reads, in one-letter code: tRNA pseudouridine synthase A (275 aa).

Catalysis depends on Asp55, which acts as the Nucleophile. A substrate-binding site is contributed by Tyr111.

Belongs to the tRNA pseudouridine synthase TruA family.

The catalysed reaction is uridine(38/39/40) in tRNA = pseudouridine(38/39/40) in tRNA. Functionally, formation of pseudouridine at positions 38, 39 and 40 in the anticodon stem and loop of transfer RNAs. The chain is tRNA pseudouridine synthase A from Methanococcoides burtonii (strain DSM 6242 / NBRC 107633 / OCM 468 / ACE-M).